Here is a 211-residue protein sequence, read N- to C-terminus: Uridine kinase (211 aa).

Residue 12–19 coordinates ATP; that stretch reads GGSGSGKT.

The protein belongs to the uridine kinase family.

The protein localises to the cytoplasm. It carries out the reaction uridine + ATP = UMP + ADP + H(+). The catalysed reaction is cytidine + ATP = CMP + ADP + H(+). Its pathway is pyrimidine metabolism; CTP biosynthesis via salvage pathway; CTP from cytidine: step 1/3. The protein operates within pyrimidine metabolism; UMP biosynthesis via salvage pathway; UMP from uridine: step 1/1. The protein is Uridine kinase of Geobacillus kaustophilus (strain HTA426).